Here is a 250-residue protein sequence, read N- to C-terminus: Glutathione transferase omega-1 (250 aa).

The GST N-terminal domain maps to 21-101; that stretch reads SKGSFRVYNM…YLDDAFPETR (81 aa). The Nucleophile role is filled by cysteine 33. Residues lysine 60 and 85-86 contribute to the glutathione site; that span reads ES. The 129-residue stretch at 106-234 folds into the GST C-terminal domain; sequence DPYEKVQQKL…TQSLEHGAAF (129 aa).

The protein belongs to the GST superfamily. Omega family. Homodimer. As to expression, expressed in the intestinal cells.

It localises to the cytoplasm. The catalysed reaction is RX + glutathione = an S-substituted glutathione + a halide anion + H(+). It catalyses the reaction L-dehydroascorbate + 2 glutathione = glutathione disulfide + L-ascorbate. It carries out the reaction methylarsonate + 2 glutathione + H(+) = methylarsonous acid + glutathione disulfide + H2O. Functionally, exhibits glutathione-dependent thiol transferase activity. Has dehydroascorbate reductase activity and may contribute to the recycling of ascorbic acid. Participates in the biotransformation of inorganic arsenic and reduces monomethylarsonic acid (MMA). Protects against environmental stress and oxidative stress. This Caenorhabditis elegans protein is Glutathione transferase omega-1 (gsto-1).